Consider the following 76-residue polypeptide: Sec-independent protein translocase protein TatA (76 aa).

The helical transmembrane segment at Met-1–Gly-21 threads the bilayer. Basic and acidic residues-rich tracts occupy residues Phe-39–Pro-50 and Gly-64–Ser-76. The disordered stretch occupies residues Phe-39–Ser-76.

Belongs to the TatA/E family. In terms of assembly, the Tat system comprises two distinct complexes: a TatABC complex, containing multiple copies of TatA, TatB and TatC subunits, and a separate TatA complex, containing only TatA subunits. Substrates initially bind to the TatABC complex, which probably triggers association of the separate TatA complex to form the active translocon.

It is found in the cell inner membrane. Functionally, part of the twin-arginine translocation (Tat) system that transports large folded proteins containing a characteristic twin-arginine motif in their signal peptide across membranes. TatA could form the protein-conducting channel of the Tat system. The chain is Sec-independent protein translocase protein TatA from Herminiimonas arsenicoxydans.